The primary structure comprises 802 residues: LPS-assembly protein LptD (802 aa).

The signal sequence occupies residues 1-29 (MARLFSLKPLVLALGFCFGTHCAAADAVA).

It belongs to the LptD family. Component of the lipopolysaccharide transport and assembly complex. Interacts with LptE and LptA.

The protein localises to the cell outer membrane. Together with LptE, is involved in the assembly of lipopolysaccharide (LPS) at the surface of the outer membrane. The protein is LPS-assembly protein LptD of Neisseria meningitidis serogroup A / serotype 4A (strain DSM 15465 / Z2491).